The sequence spans 661 residues: UvrABC system protein B (661 aa).

The 390-residue stretch at 25–414 (AGLSSKKRSQ…GTVVELIIRP (390 aa)) folds into the Helicase ATP-binding domain. 38–45 (GITGSGKT) lines the ATP pocket. A Beta-hairpin motif is present at residues 91–114 (YYDYYQPEAYIARTDTFIEKDSSI). The Helicase C-terminal domain maps to 430–592 (QVEDLISEIQ…IIPKTINRAI (163 aa)). Residues 621-656 (KTHIDKLKKEMLKAASNLEFEQAVKLRDQLKTLEEA) form the UVR domain.

The protein belongs to the UvrB family. In terms of assembly, forms a heterotetramer with UvrA during the search for lesions. Interacts with UvrC in an incision complex.

Its subcellular location is the cytoplasm. Functionally, the UvrABC repair system catalyzes the recognition and processing of DNA lesions. A damage recognition complex composed of 2 UvrA and 2 UvrB subunits scans DNA for abnormalities. Upon binding of the UvrA(2)B(2) complex to a putative damaged site, the DNA wraps around one UvrB monomer. DNA wrap is dependent on ATP binding by UvrB and probably causes local melting of the DNA helix, facilitating insertion of UvrB beta-hairpin between the DNA strands. Then UvrB probes one DNA strand for the presence of a lesion. If a lesion is found the UvrA subunits dissociate and the UvrB-DNA preincision complex is formed. This complex is subsequently bound by UvrC and the second UvrB is released. If no lesion is found, the DNA wraps around the other UvrB subunit that will check the other stand for damage. The protein is UvrABC system protein B of Rickettsia conorii (strain ATCC VR-613 / Malish 7).